We begin with the raw amino-acid sequence, 349 residues long: Probable G-protein coupled receptor 21 (349 aa).

Residues 1 to 32 (MNSTLDGNQSSHPFCLLAFGYLETVNFCLLEV) are Extracellular-facing. Residues asparagine 2 and asparagine 8 are each glycosylated (N-linked (GlcNAc...) asparagine). A helical transmembrane segment spans residues 33–53 (LIIVFLTVLIISGNIIVIFVF). Over 54-75 (HCAPLLNHHTTSYFIQTMAYAD) the chain is Cytoplasmic. A helical membrane pass occupies residues 76–96 (LFVGVSCVVPSLSLLHHPLPV). At 97–104 (EESLTCQI) the chain is on the extracellular side. Residues 105–125 (FGFVVSVLKSVSMASLACISI) traverse the membrane as a helical segment. Over 126-147 (DRYIAITKPLTYNTLVTPWRLR) the chain is Cytoplasmic. The helical transmembrane segment at 148–168 (LCIFLIWLYSTLVFLPSFFHW) threads the bilayer. Over 169 to 191 (GKPGYHGDVFQWCAESWHTDSYF) the chain is Extracellular. Residues 192 to 212 (TLFIVMMLYAPAALIVCFTYF) form a helical membrane-spanning segment. At 213–252 (NIFRICQQHTKDISERQARFSSQSGETGEVQACPDKRYAM) the chain is on the cytoplasmic side. A helical transmembrane segment spans residues 253–273 (VLFRITSVFYILWLPYIIYFL). Residues 274-283 (LESSTGHSNR) are Extracellular-facing. The helical transmembrane segment at 284–304 (FASFLTTWLAISNSFCNCVIY) threads the bilayer. Residues 305–349 (SLSNSVFQRGLKRLSGAMCTSCASQTTANDPYTVRSKGPLNGCHI) are Cytoplasmic-facing.

This sequence belongs to the G-protein coupled receptor 1 family. In terms of tissue distribution, not detected in the brain regions thalamus, putamen, caudate, frontal cortex, pons, hypothalamus, hippocampus.

The protein resides in the cell membrane. Functionally, orphan receptor. This Homo sapiens (Human) protein is Probable G-protein coupled receptor 21 (GPR21).